Here is a 385-residue protein sequence, read N- to C-terminus: dTDP-4-dehydro-2,3,6-trideoxy-D-glucose 4-aminotransferase (385 aa).

Position 182 is an N6-(pyridoxal phosphate)lysine (lysine 182).

Belongs to the DegT/DnrJ/EryC1 family. As to quaternary structure, homodimer. Requires pyridoxal 5'-phosphate as cofactor.

It catalyses the reaction dTDP-4-amino-2,3,4,6-tetradeoxy-alpha-D-erythro-hexopyranose + 2-oxoglutarate = dTDP-4-dehydro-2,3,6-trideoxy-alpha-D-hexopyranose + L-glutamate. Functionally, involved in the biosynthesis of forosamine ((4-dimethylamino)-2,3,4,6-tetradeoxy-alpha-D-threo-hexopyranose), a highly deoxygenated sugar component of several bioactive natural products such as the insecticidal spinosyns A and D. In the presence of pyridoxal 5'-phosphate (PLP) and alpha-ketoglutarate, catalyzes the C-4 transamination of dTDP-4-keto-2,3,6-trideoxy-alpha-D-glucose to yield dTDP-4-amino-2,3,4,6-tetradeoxy-alpha-D-glucose. It can also use pyruvate, but less efficiently than alpha-ketoglutarate. Also able to catalyze the C-4 transamination of dTDP-4-keto-2,6-dideoxy-alpha-D-glucose to yield dTDP-4-amino-2,4,6-trideoxy-D-glucose. The polypeptide is dTDP-4-dehydro-2,3,6-trideoxy-D-glucose 4-aminotransferase (Saccharopolyspora spinosa).